The primary structure comprises 178 residues: MEIRDNNKVNLCFAFDNLRKELSRPYGILFTNNKLFLDFVSKSIQQGFKVITVGDYVSRVLEENGIIPFLEVIDGKTKRSIPQRTIVKNKEYRVTNEAGKIRFEIFEIMENILKDRDGGVVFVNGEEDLLVIPVTLSADNGDIVIYGQPNAGAVVIIVNEMIRWRVRDILEKAVVKEC.

GTP is bound by residues D55, V57, D74, K76, and E127.

It belongs to the GTP-dependent DPCK family.

The catalysed reaction is 3'-dephospho-CoA + GTP = GDP + CoA + H(+). Its pathway is cofactor biosynthesis; coenzyme A biosynthesis. In terms of biological role, catalyzes the GTP-dependent phosphorylation of the 3'-hydroxyl group of dephosphocoenzyme A to form coenzyme A (CoA). The protein is GTP-dependent dephospho-CoA kinase of Saccharolobus islandicus (strain Y.N.15.51 / Yellowstone #2) (Sulfolobus islandicus).